Consider the following 457-residue polypeptide: Interferon regulatory factor 7 (457 aa).

A DNA-binding region (IRF tryptophan pentad repeat) is located at residues 9 to 126 (RVLFGDWLLG…DPHKVYELSR (118 aa)). Residue Lys-92 is modified to N6-acetyllysine; by KAT2A and KAT2B. Residues 238-410 (RSLGFLDVTI…TLILVKLEPW (173 aa)) form a necessary for the interaction with NMI region. Lys-329 participates in a covalent cross-link: Glycyl lysine isopeptide (Lys-Gly) (interchain with G-Cter in ubiquitin). Glycyl lysine isopeptide (Lys-Gly) (interchain with G-Cter in SUMO) cross-links involve residues Lys-398 and Lys-400. Ser-425, Ser-426, and Ser-429 each carry phosphoserine. Ser-431 bears the Phosphoserine; by TBK1 and IKKE mark. Residues Ser-437, Ser-438, and Ser-441 each carry the phosphoserine modification.

This sequence belongs to the IRF family. In terms of assembly, monomer. Homodimer; phosphorylation-induced. Heterodimer with IRF3. Interacts with TICAM1 and TICAM2. Interacts with MYD88 and TRAF6. Interacts with NMI; the interaction is direct and leads to the inhibition of IRF7-mediated type I IFN production. Interacts with GBP4; preventing interaction between TRAF6 and IRF7, resulting in impaired TRAF6-mediated IRF7 ubiquitination. Interacts with TARBP2; this interaction prevents IRF7 phosphorylation and activation. In terms of processing, acetylation inhibits its DNA-binding ability and activity. Post-translationally, in response to a viral infection, phosphorylated by TBK1 and IKBKE1. Phosphorylation, and subsequent activation is inhibited by vaccinia virus protein E3. In TLR7- and TLR9-mediated signaling pathway, phosphorylated by IRAK1. TRAF6-mediated ubiquitination is required for IRF7 activation. TRIM35 mediates IRF7 'Lys-48'-linked polyubiquitination and subsequent proteasomal degradation. 'Lys-48'-linked polyubiquitination and subsequent proteasomal degradation is NMI-dependent in response to Sendai virus infection. Ubiquitinated by UBE3C, leading to its degradation. In terms of processing, sumoylated by TRIM28, which inhibits its transactivation activity. Post-translationally, 'Lys-63'-linked ubiquitination by NEURL3 promotes IRF7 activation.

It is found in the nucleus. Its subcellular location is the cytoplasm. Its activity is regulated as follows. In the absence of viral infection, maintained as a monomer in an autoinhibited state and phosphorylation disrupts this autoinhibition leading to the liberation of the DNA-binding and dimerization activities and its nuclear localization where it can activate type I IFN and ISG genes. In terms of biological role, key transcriptional regulator of type I interferon (IFN)-dependent immune responses and plays a critical role in the innate immune response against DNA and RNA viruses. Regulates the transcription of type I IFN genes (IFN-alpha and IFN-beta) and IFN-stimulated genes (ISG) by binding to an interferon-stimulated response element (ISRE) in their promoters. Can efficiently activate both the IFN-beta (IFNB) and the IFN-alpha (IFNA) genes and mediate their induction via both the virus-activated, MyD88-independent pathway and the TLR-activated, MyD88-dependent pathway. Induces transcription of ubiquitin hydrolase USP25 mRNA in response to lipopolysaccharide (LPS) or viral infection in a type I IFN-dependent manner. Required during both the early and late phases of the IFN gene induction but is more critical for the late than for the early phase. Exists in an inactive form in the cytoplasm of uninfected cells and following viral infection, double-stranded RNA (dsRNA), or toll-like receptor (TLR) signaling, becomes phosphorylated by IKBKE and TBK1 kinases. This induces a conformational change, leading to its dimerization and nuclear localization where along with other coactivators it can activate transcription of the type I IFN and ISG genes. Can also play a role in regulating adaptive immune responses by inducing PSMB9/LMP2 expression, either directly or through induction of IRF1. Binds to the Q promoter (Qp) of EBV nuclear antigen 1 a (EBNA1) and may play a role in the regulation of EBV latency. Can activate distinct gene expression programs in macrophages and regulate the anti-tumor properties of primary macrophages. This is Interferon regulatory factor 7 (Irf7) from Mus musculus (Mouse).